A 134-amino-acid chain; its full sequence is Putative toxin MJ0605 (134 aa).

This sequence belongs to the UPF0332 family.

Putative toxin component of a putative type VII toxin-antitoxin (TA) system. Its cognate antitoxin might be MJ0604. The sequence is that of Putative toxin MJ0605 from Methanocaldococcus jannaschii (strain ATCC 43067 / DSM 2661 / JAL-1 / JCM 10045 / NBRC 100440) (Methanococcus jannaschii).